The following is a 407-amino-acid chain: uncharacterized protein (407 aa).

Disordered stretches follow at residues M1–P62 and S350–S379. Residues P17 to A30 show a composition bias toward basic and acidic residues.

This is an uncharacterized protein from Ictaluridae (bullhead catfishes).